The following is a 100-amino-acid chain: Large ribosomal subunit protein bL28 (100 aa).

This sequence belongs to the bacterial ribosomal protein bL28 family.

The chain is Large ribosomal subunit protein bL28 from Gluconacetobacter diazotrophicus (strain ATCC 49037 / DSM 5601 / CCUG 37298 / CIP 103539 / LMG 7603 / PAl5).